A 37-amino-acid polypeptide reads, in one-letter code: Large ribosomal subunit protein bL36 (37 aa).

This sequence belongs to the bacterial ribosomal protein bL36 family.

This chain is Large ribosomal subunit protein bL36, found in Treponema denticola (strain ATCC 35405 / DSM 14222 / CIP 103919 / JCM 8153 / KCTC 15104).